A 358-amino-acid polypeptide reads, in one-letter code: tRNA N6-adenosine threonylcarbamoyltransferase (358 aa).

Residues His111 and His115 each contribute to the Fe cation site. Substrate is bound by residues 146-150 (LVSGG), Asp179, Gly192, and Asn294. A Fe cation-binding site is contributed by Asp322.

It belongs to the KAE1 / TsaD family. Fe(2+) serves as cofactor.

Its subcellular location is the cytoplasm. The enzyme catalyses L-threonylcarbamoyladenylate + adenosine(37) in tRNA = N(6)-L-threonylcarbamoyladenosine(37) in tRNA + AMP + H(+). Functionally, required for the formation of a threonylcarbamoyl group on adenosine at position 37 (t(6)A37) in tRNAs that read codons beginning with adenine. Is involved in the transfer of the threonylcarbamoyl moiety of threonylcarbamoyl-AMP (TC-AMP) to the N6 group of A37, together with TsaE and TsaB. TsaD likely plays a direct catalytic role in this reaction. This is tRNA N6-adenosine threonylcarbamoyltransferase from Helicobacter hepaticus (strain ATCC 51449 / 3B1).